The sequence spans 94 residues: Small ribosomal subunit protein uS19c (94 aa).

This sequence belongs to the universal ribosomal protein uS19 family.

The protein resides in the plastid. Its subcellular location is the chloroplast. In terms of biological role, protein S19 forms a complex with S13 that binds strongly to the 16S ribosomal RNA. The sequence is that of Small ribosomal subunit protein uS19c (rps19) from Euglena gracilis.